The sequence spans 869 residues: Mismatch repair endonuclease PMS2 (869 aa).

Residues Asn-44, Asp-69, Glu-108, Ala-109, and Leu-110 each contribute to the ATP site. Positions 585 to 588 (RRFK) match the Nuclear localization signal motif.

This sequence belongs to the DNA mismatch repair MutL/HexB family.

It localises to the nucleus. It catalyses the reaction ATP + H2O = ADP + phosphate + H(+). In terms of biological role, component of the post-replicative DNA mismatch repair system (MMR). Involved in B cell growth by positively regulating B cell proliferation and controlling replication efficiency. Controls cell cycle to prevent re-replication and defects in DNA damage-induced G2 checkpoint. Doesn't seem to counteract or control the immunoglobulin gene conversion (Ig GC) and to contribute to guanine/uracil mismatch repair. Possesses an ATPase activity, but in the absence of gross structural changes, ATP hydrolysis may not be necessary for proficient mismatch repair. The protein is Mismatch repair endonuclease PMS2 of Gallus gallus (Chicken).